The following is a 385-amino-acid chain: uncharacterized protein (385 aa).

This is an uncharacterized protein from Caenorhabditis elegans.